A 388-amino-acid polypeptide reads, in one-letter code: Mitochondrial distribution and morphology protein 12 (388 aa).

In terms of domain architecture, SMP-LTD spans 1–388; that stretch reads MSLDINWSLL…VFPNFHTVAL (388 aa). Disordered stretches follow at residues 75–101 and 209–249; these read DDEGDFAEEEKQREKEREERDKLRNEA and PMSI…KVSS. The span at 83-101 shows a compositional bias: basic and acidic residues; it reads EEKQREKEREERDKLRNEA. Positions 234-243 are enriched in pro residues; it reads PSPPAHPAGL.

It belongs to the MDM12 family. Component of the ER-mitochondria encounter structure (ERMES) or MDM complex, composed of MMM1, MDM10, MDM12 and MDM34. An MMM1 homodimer associates with one molecule of MDM12 on each side in a pairwise head-to-tail manner, and the SMP-LTD domains of MMM1 and MDM12 generate a continuous hydrophobic tunnel for phospholipid trafficking.

It is found in the mitochondrion outer membrane. The protein resides in the endoplasmic reticulum membrane. Its function is as follows. Component of the ERMES/MDM complex, which serves as a molecular tether to connect the endoplasmic reticulum (ER) and mitochondria. Components of this complex are involved in the control of mitochondrial shape and protein biogenesis, and function in nonvesicular lipid trafficking between the ER and mitochondria. MDM12 is required for the interaction of the ER-resident membrane protein MMM1 and the outer mitochondrial membrane-resident beta-barrel protein MDM10. The MDM12-MMM1 subcomplex functions in the major beta-barrel assembly pathway that is responsible for biogenesis of all mitochondrial outer membrane beta-barrel proteins, and acts in a late step after the SAM complex. The MDM10-MDM12-MMM1 subcomplex further acts in the TOM40-specific pathway after the action of the MDM12-MMM1 complex. Essential for establishing and maintaining the structure of mitochondria and maintenance of mtDNA nucleoids. This chain is Mitochondrial distribution and morphology protein 12, found in Cryptococcus neoformans var. neoformans serotype D (strain JEC21 / ATCC MYA-565) (Filobasidiella neoformans).